Reading from the N-terminus, the 304-residue chain is E3 ubiquitin-protein ligase RNF144B (304 aa).

The TRIAD supradomain stretch occupies residues 27-245; it reads PLVTCKLCLC…YDRGPCRNKL (219 aa). Positions 31, 34, 54, 57, 122, 127, 146, 149, 154, 157, 162, 167, 194, and 197 each coordinate Zn(2+). Residues 31 to 81 form an RING-type 1 zinc finger; it reads CKLCLCEQSLDKMTTLQECRCIFCTACLKQYMQLAIREGCGSPITCPDMVC. The IBR-type zinc finger occupies 102–167; the sequence is QLYQRLKFER…KDAWHAEVSC (66 aa). Residues 194-223 form an RING-type 2; atypical zinc finger; the sequence is CPVCRVYIERNEGCAQMMCKNCKHTFCWYC. Cysteine 207 is an active-site residue. Cysteine 212, cysteine 215, cysteine 220, cysteine 223, histidine 235, and cysteine 241 together coordinate Zn(2+). Residues 259-279 traverse the membrane as a helical segment; it reads VVGILVGLGIIALVTSPLLLL.

This sequence belongs to the RBR family. RNF144 subfamily. Interacts with UBE2L3, UBE2L6 and LCMT2, as well as with BAX. Interacts with TBK1; this interaction inhibits TBK1 phosphorylation and 'Lys-63'-linked polyubiquitination. Post-translationally, auto-ubiquitinated.

Its subcellular location is the mitochondrion membrane. The protein resides in the cytoplasm. It carries out the reaction [E2 ubiquitin-conjugating enzyme]-S-ubiquitinyl-L-cysteine + [acceptor protein]-L-lysine = [E2 ubiquitin-conjugating enzyme]-L-cysteine + [acceptor protein]-N(6)-ubiquitinyl-L-lysine.. The protein operates within protein modification; protein ubiquitination. In terms of biological role, E3 ubiquitin-protein ligase which accepts ubiquitin from E2 ubiquitin-conjugating enzymes UBE2L3 and UBE2L6 in the form of a thioester and then directly transfers the ubiquitin to targeted substrates such as LCMT2, thereby promoting their degradation. Induces apoptosis via a p53/TP53-dependent but caspase-independent mechanism. Plays a crucial role in maintaining the genomic stability by controlling the degradation of multiple proteins involved in mitotic progression and DNA damage. Regulates epithelial homeostasis by mediating degradation of CDKN1A and isoform 2 of TP63. Plays a regulatory role in innate immunity by negatively regulating IRF3 activation and IFN-beta production. Mechanistically, inhibits TBK1 phosphorylation and 'Lys-63'-linked polyubiquitination independently of its E3 ligase activity. Alternatively, promotes 'Lys-27' and 'Lys-33'-linked ubiquitination of IFIH1/MDA5, promoting selective autophagic degradation of IFIH1/MDA5 to inhibit antiviral response. This is E3 ubiquitin-protein ligase RNF144B (RNF144B) from Bos taurus (Bovine).